The sequence spans 82 residues: Conotoxin MiK42 (82 aa).

Positions 1–22 (MKLTCALIVAMLLLTACQLITT) are cleaved as a signal peptide. The propeptide occupies 23-49 (DDFRGRQQYRTARSRTKMQNYKIFRLT). Cystine bridges form between Cys52–Cys67, Cys59–Cys70, and Cys66–Cys80.

The protein belongs to the conotoxin O1 superfamily. In terms of tissue distribution, expressed by the venom duct.

The protein localises to the secreted. The polypeptide is Conotoxin MiK42 (Conus miles (Soldier cone)).